A 246-amino-acid polypeptide reads, in one-letter code: Putative carbonic anhydrase 3 (246 aa).

The Alpha-carbonic anhydrase domain occupies 3–244; that stretch reads GHWSYCDDDE…LNDRKIVHIV (242 aa). The active-site Proton acceptor is the histidine 61. The Zn(2+) site is built by histidine 91, histidine 93, and histidine 116. 187 to 188 contributes to the substrate binding site; the sequence is TT.

It belongs to the alpha-carbonic anhydrase family. Zn(2+) is required as a cofactor.

It carries out the reaction hydrogencarbonate + H(+) = CO2 + H2O. In terms of biological role, reversible hydration of carbon dioxide. The protein is Putative carbonic anhydrase 3 (cah-3) of Caenorhabditis elegans.